A 184-amino-acid polypeptide reads, in one-letter code: Orotate phosphoribosyltransferase (184 aa).

Residues R99, K100, K103, H105, and 125–133 (EDTTTTGNS) contribute to the 5-phospho-alpha-D-ribose 1-diphosphate site. Residues T129 and R157 each coordinate orotate.

Belongs to the purine/pyrimidine phosphoribosyltransferase family. PyrE subfamily. Homodimer. The cofactor is Mg(2+).

The catalysed reaction is orotidine 5'-phosphate + diphosphate = orotate + 5-phospho-alpha-D-ribose 1-diphosphate. It functions in the pathway pyrimidine metabolism; UMP biosynthesis via de novo pathway; UMP from orotate: step 1/2. Functionally, catalyzes the transfer of a ribosyl phosphate group from 5-phosphoribose 1-diphosphate to orotate, leading to the formation of orotidine monophosphate (OMP). The protein is Orotate phosphoribosyltransferase of Corynebacterium glutamicum (strain R).